The chain runs to 180 residues: Required for excision 1-B domain-containing protein (180 aa).

Residues 1–23 (MITAEAASESTVPAVPGDTAATG) form a disordered region.

The chain is Required for excision 1-B domain-containing protein from Bos taurus (Bovine).